We begin with the raw amino-acid sequence, 205 residues long: High frequency lysogenization protein HflD homolog (205 aa).

This sequence belongs to the HflD family.

It localises to the cytoplasm. The protein resides in the cell inner membrane. The sequence is that of High frequency lysogenization protein HflD homolog from Haemophilus influenzae (strain PittEE).